A 459-amino-acid polypeptide reads, in one-letter code: Chromosomal replication initiator protein DnaA (459 aa).

Residues 1–74 are domain I, interacts with DnaA modulators; the sequence is MQKIETFWHF…DEMAQDHFNE (74 aa). Positions 74-122 are domain II; it reads ERISFRLELREPAESEAQTVRTSAQKNREDKKPAAEKTQGVTSRKTNPS. Positions 87–122 are disordered; it reads ESEAQTVRTSAQKNREDKKPAAEKTQGVTSRKTNPS. The segment covering 89–98 has biased composition (polar residues); it reads EAQTVRTSAQ. Residues 99-108 show a composition bias toward basic and acidic residues; sequence KNREDKKPAA. Positions 112 to 122 are enriched in polar residues; it reads QGVTSRKTNPS. Residues 123 to 339 are domain III, AAA+ region; it reads QLNASFTFDA…GALKRVLAFS (217 aa). The ATP site is built by Gly167, Gly169, Lys170, and Thr171. A domain IV, binds dsDNA region spans residues 340–459; sequence RFTGHSISLD…FNALMHILRG (120 aa).

This sequence belongs to the DnaA family. Oligomerizes as a right-handed, spiral filament on DNA at oriC.

It localises to the cytoplasm. Functionally, plays an essential role in the initiation and regulation of chromosomal replication. ATP-DnaA binds to the origin of replication (oriC) to initiate formation of the DNA replication initiation complex once per cell cycle. Binds the DnaA box (a 9 base pair repeat at the origin) and separates the double-stranded (ds)DNA. Forms a right-handed helical filament on oriC DNA; dsDNA binds to the exterior of the filament while single-stranded (ss)DNA is stabiized in the filament's interior. The ATP-DnaA-oriC complex binds and stabilizes one strand of the AT-rich DNA unwinding element (DUE), permitting loading of DNA polymerase. After initiation quickly degrades to an ADP-DnaA complex that is not apt for DNA replication. Binds acidic phospholipids. The polypeptide is Chromosomal replication initiator protein DnaA (Nitrosomonas europaea (strain ATCC 19718 / CIP 103999 / KCTC 2705 / NBRC 14298)).